The following is a 254-amino-acid chain: MEILIRSTPADVAVAAADILASYANTSATLGLATGSTPVATYKELIARHERGEVSFAGSRAFLLDEYLGLAPEHEQSYYATIRRDFTSHVDFDDALVKSPEGSAADPVAATAAYDQAIRNAGGIDVQLLGIGANGHIGFNEPSSSLTSRTRVVALHPQTVQDNSRFFDNLEEVPRHALTQGLGTISEARHLLLIATGTNKANAVQAMVEGPLSARCPGSVLQLHPRATVIVDEAAAALLEDREYYLFADQNRLH.

D65 serves as the catalytic Proton acceptor; for enolization step. N134 functions as the For ring-opening step in the catalytic mechanism. Catalysis depends on H136, which acts as the Proton acceptor; for ring-opening step. The For ring-opening step role is filled by E141.

Belongs to the glucosamine/galactosamine-6-phosphate isomerase family. NagB subfamily.

It carries out the reaction alpha-D-glucosamine 6-phosphate + H2O = beta-D-fructose 6-phosphate + NH4(+). It participates in amino-sugar metabolism; N-acetylneuraminate degradation; D-fructose 6-phosphate from N-acetylneuraminate: step 5/5. Catalyzes the reversible isomerization-deamination of glucosamine 6-phosphate (GlcN6P) to form fructose 6-phosphate (Fru6P) and ammonium ion. This Corynebacterium aurimucosum (strain ATCC 700975 / DSM 44827 / CIP 107346 / CN-1) (Corynebacterium nigricans) protein is Glucosamine-6-phosphate deaminase.